The sequence spans 238 residues: ATP-dependent dethiobiotin synthetase BioD (238 aa).

13 to 18 (DIGKTF) provides a ligand contact to ATP. A Mg(2+)-binding site is contributed by T17. Residue K38 is part of the active site. Residue S42 coordinates substrate. Residues D55, 116 to 119 (EGSG), 209 to 211 (PRI), and N216 each bind ATP. Mg(2+) contacts are provided by D55 and E116.

The protein belongs to the dethiobiotin synthetase family. In terms of assembly, homodimer. The cofactor is Mg(2+).

It is found in the cytoplasm. It catalyses the reaction (7R,8S)-7,8-diammoniononanoate + CO2 + ATP = (4R,5S)-dethiobiotin + ADP + phosphate + 3 H(+). It functions in the pathway cofactor biosynthesis; biotin biosynthesis; biotin from 7,8-diaminononanoate: step 1/2. In terms of biological role, catalyzes a mechanistically unusual reaction, the ATP-dependent insertion of CO2 between the N7 and N8 nitrogen atoms of 7,8-diaminopelargonic acid (DAPA, also called 7,8-diammoniononanoate) to form a ureido ring. The sequence is that of ATP-dependent dethiobiotin synthetase BioD from Clostridium novyi (strain NT).